The sequence spans 674 residues: Probable protein phosphatase 2C 66 (674 aa).

Residue S125 is modified to Phosphoserine. Disordered stretches follow at residues 153 to 175 (YSGPIESTKKTEKEKPKKIRKKP) and 202 to 247 (KSVI…KQSM). Positions 244–665 (KQSMNSVLDV…DDVSVIVISL (422 aa)) constitute a PPM-type phosphatase domain. D282 and G283 together coordinate Mn(2+). The segment covering 373-384 (NNKTKSDNRCDQ) has biased composition (basic and acidic residues). Residues 373–392 (NNKTKSDNRCDQKGSNSTTT) form a disordered region. The Mn(2+) site is built by D593 and D656.

The protein belongs to the PP2C family. The cofactor is Mg(2+). Requires Mn(2+) as cofactor. In terms of tissue distribution, expressed at low level in seedlings, roots, leaves, stems, young inflorescences, flowers and siliques.

Its subcellular location is the nucleus. It catalyses the reaction O-phospho-L-seryl-[protein] + H2O = L-seryl-[protein] + phosphate. The catalysed reaction is O-phospho-L-threonyl-[protein] + H2O = L-threonyl-[protein] + phosphate. The chain is Probable protein phosphatase 2C 66 (PLL2) from Arabidopsis thaliana (Mouse-ear cress).